The following is a 165-amino-acid chain: uncharacterized protein (165 aa).

The Cupin type-1 domain maps to 28-139 (QNALKDTGLA…KPNEREEAVK (112 aa)).

This is an uncharacterized protein from Bacillus subtilis (strain 168).